We begin with the raw amino-acid sequence, 122 residues long: Ribosome-binding factor A (122 aa).

The protein belongs to the RbfA family. As to quaternary structure, monomer. Binds 30S ribosomal subunits, but not 50S ribosomal subunits or 70S ribosomes.

It localises to the cytoplasm. One of several proteins that assist in the late maturation steps of the functional core of the 30S ribosomal subunit. Associates with free 30S ribosomal subunits (but not with 30S subunits that are part of 70S ribosomes or polysomes). Required for efficient processing of 16S rRNA. May interact with the 5'-terminal helix region of 16S rRNA. This chain is Ribosome-binding factor A, found in Halothermothrix orenii (strain H 168 / OCM 544 / DSM 9562).